A 449-amino-acid chain; its full sequence is UDP-N-acetylmuramoylalanine--D-glutamate ligase (449 aa).

ATP is bound at residue Gly118–Thr124.

Belongs to the MurCDEF family.

The protein localises to the cytoplasm. The enzyme catalyses UDP-N-acetyl-alpha-D-muramoyl-L-alanine + D-glutamate + ATP = UDP-N-acetyl-alpha-D-muramoyl-L-alanyl-D-glutamate + ADP + phosphate + H(+). It participates in cell wall biogenesis; peptidoglycan biosynthesis. Functionally, cell wall formation. Catalyzes the addition of glutamate to the nucleotide precursor UDP-N-acetylmuramoyl-L-alanine (UMA). This chain is UDP-N-acetylmuramoylalanine--D-glutamate ligase, found in Staphylococcus aureus (strain MSSA476).